The primary structure comprises 295 residues: Phosphatidylglycerol--prolipoprotein diacylglyceryl transferase (295 aa).

The next 7 helical transmembrane spans lie at 17–37 (IKVHWYGIMYLLGFTAAWLLG), 57–77 (LLFYAMLGVVLGGRIGYMLFY), 92–112 (VWDGGMSFHGGLLGVIAACWW), 127–147 (FMAPLVPLGLGFGRIGNFIGA), 196–216 (QLYEALLEGLVMFVVLWAVSA), 222–242 (YLVGGLFALMYGLFRFAVEFV), and 255–275 (WLTRGQILSLPLIAFGLVLLV). Arginine 140 serves as a coordination point for a 1,2-diacyl-sn-glycero-3-phospho-(1'-sn-glycerol).

The protein belongs to the Lgt family.

Its subcellular location is the cell inner membrane. The catalysed reaction is L-cysteinyl-[prolipoprotein] + a 1,2-diacyl-sn-glycero-3-phospho-(1'-sn-glycerol) = an S-1,2-diacyl-sn-glyceryl-L-cysteinyl-[prolipoprotein] + sn-glycerol 1-phosphate + H(+). It participates in protein modification; lipoprotein biosynthesis (diacylglyceryl transfer). Catalyzes the transfer of the diacylglyceryl group from phosphatidylglycerol to the sulfhydryl group of the N-terminal cysteine of a prolipoprotein, the first step in the formation of mature lipoproteins. This chain is Phosphatidylglycerol--prolipoprotein diacylglyceryl transferase, found in Stenotrophomonas maltophilia (strain R551-3).